The following is a 553-amino-acid chain: MPAFSQATDLSAWKELQEHHTAVGRNIVLKEAFEKDPQRFEKFSRTFKNTVDNSDILFDFSKNFLTEETLSLLVKLAKEANVEELRDAMFKGEHINFTEDRAVYHAALRNVSNEPMQVDGKSVVEDVNSVLEHMKEFSEQVRSGEWKGYTDKKIDTIINIGIGGSDLGPVMVTEALKPYGAPGMKLHFVSNIDGTHIAEALKDSNPETTLFLIASKTFTTAETTTNANSAKKWFLETAKDESHIAKHFVALSTNEAEVTKFGIDKKNMFGFESWVGGRYSVWSAIGLSVALYIGYDNFHQFLAGAQAMDKHFREAPLEQNIPAIGGLLSVWYSDFFGAQTHLVAPFDQYLHRFPAYLQQLSMESNGKAITRSGEYVKYTTGPILFGEPATNAQHSFFQLLHQGTKLIPSDFIMAAESHNPVEGGKHQRMLASNFLAQSEALMVGKTPEQVKTEGAPDNLVPHKTFLGNRPTTSILAQKITPSTLGALIAYYEHLTFTEGAVWNINSFDQWGVELGKVLAKKIQQELETSGAGAGHDASTSGLLAAFKQKANLA.

D-glucose 6-phosphate-binding positions include 164 to 165, 215 to 220, Q359, E363, H394, and K516; these read GS and SKTFTT. E363 acts as the Proton donor in catalysis. Residues H394 and K516 contribute to the active site.

This sequence belongs to the GPI family. In terms of assembly, homodimer.

It localises to the cytoplasm. The protein resides in the cytosol. It catalyses the reaction alpha-D-glucose 6-phosphate = beta-D-fructose 6-phosphate. Its pathway is carbohydrate degradation; glycolysis; D-glyceraldehyde 3-phosphate and glycerone phosphate from D-glucose: step 2/4. In terms of biological role, in the cytoplasm, catalyzes the conversion of glucose-6-phosphate to fructose-6-phosphate, the second step in glycolysis, and the reverse reaction during gluconeogenesis. The chain is Glucose-6-phosphate isomerase (pgiA) from Aspergillus oryzae (strain ATCC 42149 / RIB 40) (Yellow koji mold).